Here is a 115-residue protein sequence, read N- to C-terminus: Large ribosomal subunit protein uL22 (115 aa).

This sequence belongs to the universal ribosomal protein uL22 family. As to quaternary structure, part of the 50S ribosomal subunit.

In terms of biological role, this protein binds specifically to 23S rRNA; its binding is stimulated by other ribosomal proteins, e.g. L4, L17, and L20. It is important during the early stages of 50S assembly. It makes multiple contacts with different domains of the 23S rRNA in the assembled 50S subunit and ribosome. The globular domain of the protein is located near the polypeptide exit tunnel on the outside of the subunit, while an extended beta-hairpin is found that lines the wall of the exit tunnel in the center of the 70S ribosome. This is Large ribosomal subunit protein uL22 from Coxiella burnetii (strain CbuK_Q154) (Coxiella burnetii (strain Q154)).